Here is a 295-residue protein sequence, read N- to C-terminus: UDP-N-acetylenolpyruvoylglucosamine reductase (295 aa).

The FAD-binding PCMH-type domain maps to 23–188; that stretch reads KVGGPADFLA…ISAKFALKPG (166 aa). Arg-167 is an active-site residue. Ser-217 (proton donor) is an active-site residue. The active site involves Glu-287.

The protein belongs to the MurB family. It depends on FAD as a cofactor.

The protein localises to the cytoplasm. It catalyses the reaction UDP-N-acetyl-alpha-D-muramate + NADP(+) = UDP-N-acetyl-3-O-(1-carboxyvinyl)-alpha-D-glucosamine + NADPH + H(+). It participates in cell wall biogenesis; peptidoglycan biosynthesis. Its function is as follows. Cell wall formation. This Streptococcus pyogenes serotype M28 (strain MGAS6180) protein is UDP-N-acetylenolpyruvoylglucosamine reductase.